The sequence spans 190 residues: Putative glutathione-dependent formaldehyde-activating enzyme (190 aa).

One can recognise a CENP-V/GFA domain in the interval 19–165; that stretch reads FKGGKLYCHC…FRKEGLQTYD (147 aa). Cysteine 26, cysteine 28, cysteine 47, cysteine 49, cysteine 52, cysteine 94, and cysteine 97 together coordinate Zn(2+).

This sequence belongs to the Gfa family. It depends on Zn(2+) as a cofactor.

The enzyme catalyses S-(hydroxymethyl)glutathione = glutathione + formaldehyde. It participates in one-carbon metabolism; formaldehyde degradation; formate from formaldehyde (glutathione route): step 1/3. In terms of biological role, catalyzes the condensation of formaldehyde and glutathione to S-hydroxymethylglutathione. This is Putative glutathione-dependent formaldehyde-activating enzyme from Phaeosphaeria nodorum (strain SN15 / ATCC MYA-4574 / FGSC 10173) (Glume blotch fungus).